The following is a 167-amino-acid chain: uncharacterized protein (167 aa).

Positions 115 to 167 are disordered; the sequence is SYRSQPQLGFKSTPPAHSSVFHHSVKAPKEDQAQEAASRPLTSQDGWNPNIKK.

This is an uncharacterized protein from Homo sapiens (Human).